Consider the following 334-residue polypeptide: Deoxyhypusine synthase (334 aa).

NAD(+) is bound by residues 73–77 (SNIIS), 99–101 (TGG), E105, and D207. Position 104–105 (104–105 (EE)) interacts with spermidine. Spermidine-binding residues include D212 and H256. 276–277 (NA) contacts NAD(+). Residues 282–284 (GSD) and 291–297 (EAVSWGK) contribute to the spermidine site. Residue K297 is the Nucleophile of the active site. 310-311 (DA) lines the NAD(+) pocket.

It belongs to the deoxyhypusine synthase family. It depends on NAD(+) as a cofactor.

The enzyme catalyses [eIF5A protein]-L-lysine + spermidine = [eIF5A protein]-deoxyhypusine + propane-1,3-diamine. Its pathway is protein modification; eIF5A hypusination. Catalyzes the NAD-dependent oxidative cleavage of spermidine and the subsequent transfer of the butylamine moiety of spermidine to the epsilon-amino group of a specific lysine residue of the eIF-5A precursor protein to form the intermediate deoxyhypusine residue. The chain is Deoxyhypusine synthase (DYS1) from Encephalitozoon cuniculi (strain GB-M1) (Microsporidian parasite).